We begin with the raw amino-acid sequence, 289 residues long: Nucleotide-binding protein Franean1_2060 (289 aa).

13–20 (GLSGAGRS) is a binding site for ATP. A GTP-binding site is contributed by 64 to 67 (DVRG).

This sequence belongs to the RapZ-like family.

Functionally, displays ATPase and GTPase activities. This chain is Nucleotide-binding protein Franean1_2060, found in Parafrankia sp. (strain EAN1pec).